A 462-amino-acid chain; its full sequence is Cysteine--tRNA ligase (462 aa).

A Zn(2+)-binding site is contributed by cysteine 24. The short motif at proline 26–histidine 36 is the 'HIGH' region element. Zn(2+)-binding residues include cysteine 199, histidine 224, and glutamate 228. Positions lysine 256–serine 260 match the 'KMSKS' region motif. Lysine 259 is a binding site for ATP.

Belongs to the class-I aminoacyl-tRNA synthetase family. In terms of assembly, monomer. Zn(2+) serves as cofactor.

It localises to the cytoplasm. The catalysed reaction is tRNA(Cys) + L-cysteine + ATP = L-cysteinyl-tRNA(Cys) + AMP + diphosphate. This chain is Cysteine--tRNA ligase, found in Campylobacter jejuni subsp. jejuni serotype O:6 (strain 81116 / NCTC 11828).